Reading from the N-terminus, the 1183-residue chain is Formin-like protein (1183 aa).

Disordered stretches follow at residues 1-44 and 63-82; these read MGAV…SISS and QHVRQPSLRSRSQQPMPTTD. A compositionally biased stretch (basic residues) spans 23-36; the sequence is PHSHAHHHSMRNGH. The segment covering 63 to 79 has biased composition (polar residues); it reads QHVRQPSLRSRSQQPMP. The 484-residue stretch at 76-559 folds into the GBD/FH3 domain; the sequence is QPMPTTDELD…HNEQELKKRD (484 aa). S225 is subject to Phosphoserine. Positions 572 to 584 are enriched in polar residues; the sequence is LSRSLPRSASSGD. The interval 572–681 is disordered; it reads LSRSLPRSAS…PPVAGFMPAP (110 aa). 2 stretches are compositionally biased toward pro residues: residues 605–614 and 622–640; these read LPPPPPPMPA and APPPPPPPAPPAPPPPPGF. The span at 641-654 shows a compositional bias: low complexity; it reads SPLGSPSGSLASTA. An FH2 domain is found at 687-1088; it reads IKRKVPTKYK…AALAASKKEN (402 aa). In terms of domain architecture, DAD spans 1136–1169; the sequence is DEVYNGALEDILLGLKSEPYRRADAVRRSQRRRI.

The protein belongs to the formin homology family. As to quaternary structure, self-associates. Interacts (via GBD/FH3 domain) with Cdc42; the interaction is stronger with the GTP bound form of Cdc42.

Functionally, together with Cdc42, involved in establishment of planar cell polarity in the developing compound eye by contributing to ommatidial rotation. Together with DAAM and Cdc42, has a role in neuronal development of mushroom bodies. This chain is Formin-like protein, found in Drosophila melanogaster (Fruit fly).